The chain runs to 303 residues: MSPAPAGATALPGPLPGDVHDAVLALAAAASRADGATSLSEDAVLRLRAGDGAVQHLVRHEDGVLAGYAQLVPSGDGEGDGFEGELLVHPGHRRRGHGGALLAAVEERAGARPVRLWSHGDTPGASALAARAGWTRARELLRMERTSAGLSDLAVPDLAAGLAVRPFVPGADDAAWVALNAAAFATHPEQGRWTLDDLRARLAEPWFDPALLLLAEAPDGLAAFCWMKVEDGLGELYVLGVDPARSGAGLGRALLVRGLRAVAGRVDRVDLYVDGDNLRAVRLYAGLGFSRAATDVQYASGPR.

N-acetyltransferase domains lie at 10–156 (ALPG…LAVP) and 162–303 (LAVR…SGPR). E41 lines the 1D-myo-inositol 2-(L-cysteinylamino)-2-deoxy-alpha-D-glucopyranoside pocket. 86 to 88 (LLV) contacts acetyl-CoA. Positions 189, 228, and 235 each coordinate 1D-myo-inositol 2-(L-cysteinylamino)-2-deoxy-alpha-D-glucopyranoside. Acetyl-CoA-binding positions include 239–241 (LGV) and 246–252 (SGAGLGR). Y272 contacts 1D-myo-inositol 2-(L-cysteinylamino)-2-deoxy-alpha-D-glucopyranoside. 277 to 282 (NLRAVR) provides a ligand contact to acetyl-CoA.

Belongs to the acetyltransferase family. MshD subfamily. In terms of assembly, monomer.

The catalysed reaction is 1D-myo-inositol 2-(L-cysteinylamino)-2-deoxy-alpha-D-glucopyranoside + acetyl-CoA = mycothiol + CoA + H(+). In terms of biological role, catalyzes the transfer of acetyl from acetyl-CoA to desacetylmycothiol (Cys-GlcN-Ins) to form mycothiol. The sequence is that of Mycothiol acetyltransferase from Kineococcus radiotolerans (strain ATCC BAA-149 / DSM 14245 / SRS30216).